The following is a 309-amino-acid chain: Taste receptor type 2 member 31 (309 aa).

At M1–T2 the chain is on the extracellular side. A helical transmembrane segment spans residues T3–A23. The Cytoplasmic segment spans residues N24–R55. Residues V56–Y76 form a helical membrane-spanning segment. At S77–T100 the chain is on the extracellular side. The helical transmembrane segment at S101–L121 threads the bilayer. The Cytoplasmic segment spans residues K122–K126. A helical membrane pass occupies residues S127 to I147. At N148–T181 the chain is on the extracellular side. A glycan (N-linked (GlcNAc...) asparagine) is linked at N161. The chain crosses the membrane as a helical span at residues L182 to L202. The Cytoplasmic segment spans residues C203–Q229. A helical membrane pass occupies residues T230–W250. Topologically, residues S251–P259 are extracellular. The chain crosses the membrane as a helical span at residues V260–I280. At W281–P309 the chain is on the cytoplasmic side.

It belongs to the G-protein coupled receptor T2R family.

The protein resides in the membrane. Receptor that may play a role in the perception of bitterness and is gustducin-linked. May play a role in sensing the chemical composition of the gastrointestinal content. The activity of this receptor may stimulate alpha gustducin, mediate PLC-beta-2 activation and lead to the gating of TRPM5. The protein is Taste receptor type 2 member 31 (TAS2R31) of Pan troglodytes (Chimpanzee).